The following is a 1074-amino-acid chain: Semaphorin-5A (1074 aa).

The N-terminal stretch at 1-22 (MKGACILAWLFSSLGVWRLARP) is a signal peptide. Positions 35–484 (HPVVSYKEIG…LQEHVVKIPL (450 aa)) constitute a Sema domain. 2 disulfide bridges follow: Cys-104-Cys-114 and Cys-131-Cys-140. 4 N-linked (GlcNAc...) asparagine glycosylation sites follow: Asn-147, Asn-168, Asn-227, and Asn-277. 2 cysteine pairs are disulfide-bonded: Cys-254–Cys-357 and Cys-278–Cys-320. Residues Asn-323 and Asn-367 are each glycosylated (N-linked (GlcNAc...) asparagine). The PSI domain occupies 486–533 (RCHFHQTRGACIGAQDPYCGWDAVMKKCTSLEESLSMTQWDQSVPTCP). Asn-536 and Asn-591 each carry an N-linked (GlcNAc...) asparagine glycan. 3 TSP type-1 domains span residues 540–593 (DGSF…TNCS), 595–651 (NGGW…LLCP), and 653–702 (HVFW…NACP). 6 disulfide bridges follow: Cys-607-Cys-644, Cys-611-Cys-650, Cys-622-Cys-634, Cys-665-Cys-696, Cys-669-Cys-701, and Cys-680-Cys-686. N-linked (GlcNAc...) asparagine glycosylation is present at Asn-717. 3 TSP type-1 domains span residues 784-839 (NGAW…LPCP), 841-896 (DGVW…QTCP), and 897-944 (ENWS…VFDS). 6 disulfide bridges follow: Cys-796–Cys-833, Cys-800–Cys-838, Cys-811–Cys-823, Cys-853–Cys-890, Cys-857–Cys-895, and Cys-868–Cys-880. Residues Asn-898 and Asn-933 are each glycosylated (N-linked (GlcNAc...) asparagine). Residues 969-989 (FHMMAVGLSSSILGCLLTLLV) form a helical membrane-spanning segment. N-linked (GlcNAc...) asparagine glycosylation occurs at Asn-1015.

Binds PLXNB3.

Its subcellular location is the membrane. In terms of biological role, bifunctional axonal guidance cue regulated by sulfated proteoglycans; attractive effects result from interactions with heparan sulfate proteoglycans (HSPGs), while the inhibitory effects depend on interactions with chondroitin sulfate proteoglycans (CSPGs). Ligand for receptor PLXNB3. In glioma cells, SEMA5A stimulation of PLXNB3 results in the disassembly of F-actin stress fibers, disruption of focal adhesions and cellular collapse as well as inhibition of cell migration and invasion through ARHGDIA-mediated inactivation of RAC1. May promote angiogenesis by increasing endothelial cell proliferation and migration and inhibiting apoptosis. The chain is Semaphorin-5A (Sema5a) from Rattus norvegicus (Rat).